Reading from the N-terminus, the 60-residue chain is Large ribosomal subunit protein uL30 (60 aa).

The protein belongs to the universal ribosomal protein uL30 family. Part of the 50S ribosomal subunit.

This chain is Large ribosomal subunit protein uL30, found in Desulfitobacterium hafniense (strain DSM 10664 / DCB-2).